The following is a 120-amino-acid chain: Phosphoribosyl-AMP cyclohydrolase (120 aa).

D75 provides a ligand contact to Mg(2+). A Zn(2+)-binding site is contributed by C76. Mg(2+)-binding residues include D77 and D79. Positions 92 and 99 each coordinate Zn(2+).

It belongs to the PRA-CH family. In terms of assembly, homodimer. The cofactor is Mg(2+). Zn(2+) serves as cofactor.

The protein localises to the cytoplasm. The enzyme catalyses 1-(5-phospho-beta-D-ribosyl)-5'-AMP + H2O = 1-(5-phospho-beta-D-ribosyl)-5-[(5-phospho-beta-D-ribosylamino)methylideneamino]imidazole-4-carboxamide. It participates in amino-acid biosynthesis; L-histidine biosynthesis; L-histidine from 5-phospho-alpha-D-ribose 1-diphosphate: step 3/9. Its function is as follows. Catalyzes the hydrolysis of the adenine ring of phosphoribosyl-AMP. This chain is Phosphoribosyl-AMP cyclohydrolase, found in Methanosarcina acetivorans (strain ATCC 35395 / DSM 2834 / JCM 12185 / C2A).